The primary structure comprises 74 residues: MANIKSSIKRIRISQRNRLRNQAIKSHIKWLMKHATKDEVESAIDKAVNKGVIHRNKAVRMKSKYERSHSRSTQ.

It belongs to the bacterial ribosomal protein bS20 family.

Its subcellular location is the plastid. It localises to the chloroplast. Its function is as follows. Binds directly to 16S ribosomal RNA. This is Small ribosomal subunit protein bS20c from Cyanidioschyzon merolae (strain NIES-3377 / 10D) (Unicellular red alga).